Consider the following 438-residue polypeptide: Proline--tRNA ligase (438 aa).

Belongs to the class-II aminoacyl-tRNA synthetase family. ProS type 2 subfamily. In terms of assembly, homodimer.

The protein localises to the cytoplasm. It carries out the reaction tRNA(Pro) + L-proline + ATP = L-prolyl-tRNA(Pro) + AMP + diphosphate. Catalyzes the attachment of proline to tRNA(Pro) in a two-step reaction: proline is first activated by ATP to form Pro-AMP and then transferred to the acceptor end of tRNA(Pro). This Gluconobacter oxydans (strain 621H) (Gluconobacter suboxydans) protein is Proline--tRNA ligase.